A 308-amino-acid chain; its full sequence is Dual oxidase maturation factor 1 (308 aa).

Residues M1–K21 are Extracellular-facing. The chain crosses the membrane as a helical span at residues I22 to G42. At I43 to S49 the chain is on the cytoplasmic side. A helical transmembrane segment spans residues I50–F70. The Extracellular portion of the chain corresponds to T71–C172. N94, N107, and N119 each carry an N-linked (GlcNAc...) asparagine glycan. Residues I173–L195 form a helical membrane-spanning segment. Topologically, residues F196–P199 are cytoplasmic. A helical membrane pass occupies residues V200 to I220. The Extracellular segment spans residues S221–S247. Residues Y248–L268 traverse the membrane as a helical segment. The Cytoplasmic portion of the chain corresponds to Y269–L308.

Belongs to the DUOXA family.

It localises to the membrane. Its function is as follows. Possible role in maturation and transport from the endoplasmic reticulum to the plasma membrane of functional dual oxidase. This Xenopus tropicalis (Western clawed frog) protein is Dual oxidase maturation factor 1 (duoxa1).